Consider the following 391-residue polypeptide: uncharacterized protein (391 aa).

12 consecutive transmembrane segments (helical) span residues 7–27, 39–59, 66–88, 92–111, 131–151, 156–176, 197–217, 239–259, 269–289, 292–312, 329–349, and 356–376; these read FILVLLVSISGFSQGMLLPVI, AINGLHATGLYIGVLLASPFM, LGFKPLIVMGGSIVILSLFGFIW, VWVWFLLRLFIGIGDHMLHF, SIYGLSFGLGFAAGPFMVPLV, SLPFIVSGCISLFAWLFVFFL, FYQAMLFGWVAFMPTFGYGFL, VAIILPAFAIGSIIFQFPLGI, VLLVILLTGALCFFIAGVFPS, VIGGCFFIAGMAVGSTFTLGI, LLCGITFSLGSILGPVAGGWY, and ANLFYFITLTLSSVWLALVLG.

This sequence belongs to the major facilitator superfamily.

It is found in the cell membrane. This is an uncharacterized protein from Bacillus subtilis (strain 168).